We begin with the raw amino-acid sequence, 159 residues long: Ribosomal RNA large subunit methyltransferase H (159 aa).

Residues glycine 108 and 127–132 each bind S-adenosyl-L-methionine; that span reads FSKMTF.

It belongs to the RNA methyltransferase RlmH family. As to quaternary structure, homodimer.

The protein resides in the cytoplasm. The enzyme catalyses pseudouridine(1915) in 23S rRNA + S-adenosyl-L-methionine = N(3)-methylpseudouridine(1915) in 23S rRNA + S-adenosyl-L-homocysteine + H(+). Specifically methylates the pseudouridine at position 1915 (m3Psi1915) in 23S rRNA. This Clostridium beijerinckii (strain ATCC 51743 / NCIMB 8052) (Clostridium acetobutylicum) protein is Ribosomal RNA large subunit methyltransferase H.